The sequence spans 205 residues: Thiamine-phosphate synthase (205 aa).

4-amino-2-methyl-5-(diphosphooxymethyl)pyrimidine-binding positions include 37–41 (QVREK) and N69. Mg(2+) is bound by residues D70 and D89. 4-amino-2-methyl-5-(diphosphooxymethyl)pyrimidine is bound at residue S108. Residue 134-136 (TGS) participates in 2-[(2R,5Z)-2-carboxy-4-methylthiazol-5(2H)-ylidene]ethyl phosphate binding. K137 serves as a coordination point for 4-amino-2-methyl-5-(diphosphooxymethyl)pyrimidine. 2-[(2R,5Z)-2-carboxy-4-methylthiazol-5(2H)-ylidene]ethyl phosphate is bound by residues G165 and 185 to 186 (IS).

Belongs to the thiamine-phosphate synthase family. Mg(2+) is required as a cofactor.

It catalyses the reaction 2-[(2R,5Z)-2-carboxy-4-methylthiazol-5(2H)-ylidene]ethyl phosphate + 4-amino-2-methyl-5-(diphosphooxymethyl)pyrimidine + 2 H(+) = thiamine phosphate + CO2 + diphosphate. The catalysed reaction is 2-(2-carboxy-4-methylthiazol-5-yl)ethyl phosphate + 4-amino-2-methyl-5-(diphosphooxymethyl)pyrimidine + 2 H(+) = thiamine phosphate + CO2 + diphosphate. The enzyme catalyses 4-methyl-5-(2-phosphooxyethyl)-thiazole + 4-amino-2-methyl-5-(diphosphooxymethyl)pyrimidine + H(+) = thiamine phosphate + diphosphate. It functions in the pathway cofactor biosynthesis; thiamine diphosphate biosynthesis; thiamine phosphate from 4-amino-2-methyl-5-diphosphomethylpyrimidine and 4-methyl-5-(2-phosphoethyl)-thiazole: step 1/1. In terms of biological role, condenses 4-methyl-5-(beta-hydroxyethyl)thiazole monophosphate (THZ-P) and 2-methyl-4-amino-5-hydroxymethyl pyrimidine pyrophosphate (HMP-PP) to form thiamine monophosphate (TMP). The protein is Thiamine-phosphate synthase of Clostridium botulinum (strain Loch Maree / Type A3).